The chain runs to 611 residues: Protein Pixie (611 aa).

4Fe-4S ferredoxin-type domains are found at residues 15 to 45 (RIAI…MGKL) and 54 to 83 (KIAS…IINL). ABC transporter domains are found at residues 78–323 (ITII…FLDG) and 350–570 (IKRM…LELL). ATP-binding positions include 118-125 (GQNGIGKS) and 387-394 (GENGTGKT).

The protein belongs to the ABC transporter superfamily. ABCE family. As to quaternary structure, interacts with components of eIF3 complex, namely eIF3a, eIF3j, eIF3b, eIF3c and eIF3i. Associates with the 40S ribosome subunit in an ATP-dependent manner and independently from the presence of the eIF3 complex. Forms a complex with Git and Pak; the interaction with Pak may be mediated by pix/dPIX. In terms of processing, ubiquitinated by Cnot4. Ubiquitination mediates the recruitment of autophagy receptors to the mitochondrial outer membrane and initiates mitophagy. Expressed in early and late larval imaginal disks (at protein level).

It is found in the cytoplasm. Its function is as follows. Plays a role in translation initiation and quality control of translation. Together with pelo and HBS1, is required for 48S complex formation from 80S ribosomes and dissociation of vacant 80S ribosomes. Stabilizes core components of eIF3 complex promoting their assembly into translation initiation-competent complexes. Together with pelo and HBS1, recognizes stalled ribosomes and promotes dissociation of elongation complexes assembled on non-stop mRNAs; this triggers endonucleolytic cleavage of the mRNA, a mechanism to release non-functional ribosomes and to degrade damaged mRNAs as part of the No-Go Decay (NGD) pathway. Plays a role in the regulation of mRNA turnover. Plays a role in quality control of translation of mitochondrial outer membrane-localized mRNA. As part of the Pink1-regulated signaling, ubiquitinated by Cnot4 upon mitochondria damage; this modification generates polyubiquitin signals that recruits autophagy receptors to the mitochondrial outer membrane to initiate mitophagy. Required in the wing disk for cell division and growth as well as cell survival. During muscle embryogenesis, required for the recruitment of Pak to muscle attachments in the embryo, hence may play a role in proper muscle morphogenesis and proper guidance and targeting of subsets of myotubes. This chain is Protein Pixie, found in Drosophila melanogaster (Fruit fly).